The chain runs to 153 residues: Ribosome maturation factor RimP (153 aa).

It belongs to the RimP family.

Its subcellular location is the cytoplasm. Its function is as follows. Required for maturation of 30S ribosomal subunits. In Clostridium botulinum (strain Langeland / NCTC 10281 / Type F), this protein is Ribosome maturation factor RimP.